Reading from the N-terminus, the 152-residue chain is Large ribosomal subunit protein bL9 (152 aa).

This sequence belongs to the bacterial ribosomal protein bL9 family.

In terms of biological role, binds to the 23S rRNA. The sequence is that of Large ribosomal subunit protein bL9 from Picosynechococcus sp. (strain ATCC 27264 / PCC 7002 / PR-6) (Agmenellum quadruplicatum).